Consider the following 191-residue polypeptide: Orotate phosphoribosyltransferase (191 aa).

Position 116–124 (116–124) interacts with 5-phospho-alpha-D-ribose 1-diphosphate; sequence EDVVTTGGS. The orotate site is built by Thr120 and Arg148.

Belongs to the purine/pyrimidine phosphoribosyltransferase family. PyrE subfamily. Homodimer. Mg(2+) is required as a cofactor.

The enzyme catalyses orotidine 5'-phosphate + diphosphate = orotate + 5-phospho-alpha-D-ribose 1-diphosphate. The protein operates within pyrimidine metabolism; UMP biosynthesis via de novo pathway; UMP from orotate: step 1/2. Its function is as follows. Catalyzes the transfer of a ribosyl phosphate group from 5-phosphoribose 1-diphosphate to orotate, leading to the formation of orotidine monophosphate (OMP). The chain is Orotate phosphoribosyltransferase from Carboxydothermus hydrogenoformans (strain ATCC BAA-161 / DSM 6008 / Z-2901).